Reading from the N-terminus, the 7388-residue chain is Microtubule-actin cross-linking factor 1, isoforms 1/2/3/4/5 (7388 aa).

Positions 1–47 (MSSSDEETLSERSCRSERSCRSERSYRSERSGSLSPCPPGDTLPWNL) are disordered. The tract at residues 1 to 295 (MSSSDEETLS…VITYVSSIYD (295 aa)) is actin-binding. Serine 4 is modified (phosphoserine). Over residues 9 to 30 (LSERSCRSERSCRSERSYRSER) the composition is skewed to basic and acidic residues. Phosphoserine occurs at positions 35 and 57. Calponin-homology (CH) domains lie at 78-181 (RVQK…LHFQ) and 194-298 (MSAK…DAFP). LRR repeat units lie at residues 148–171 (QRQV…LTLG) and 240–264 (LVDM…VAER). Position 280 is a phosphoserine (serine 280). 2 LRR repeats span residues 377–399 (LYKL…YHPN) and 441–464 (LNCE…LESG). Serine 814 carries the phosphoserine modification. An SH3 domain is found at 868 to 925 (KNTISVKAVCDYRQIEITICKNDECVLEDNSQRTKWKVISPTGNEAMVPSVCFLIPPP). An LRR 5 repeat occupies 1050-1073 (ISELKNIRLRLEEYEQRVVKRIQS). Residue serine 1122 is modified to Phosphoserine. LRR repeat units lie at residues 1128–1154 (VPTL…VYLN), 1187–1210 (LADL…VKDK), and 1257–1282 (HRVI…DYRA). Serine 1367 and serine 1376 each carry phosphoserine. 5 Plectin repeats span residues 1577–1621 (LVLL…RELQ), 1654–1696 (LKIL…VLES), 1769–1809 (RLLE…CAIL), 1811–1848 (RQLQ…VILE), and 1855–1886 (GLLW…KILS). 2 positions are modified to phosphoserine: serine 2006 and serine 2051. Residues 2051 to 2085 (SQNKEYPDREDCTTEKGKKTTVETEDSSVENPEQD) are disordered. Positions 2055–2072 (EYPDREDCTTEKGKKTTV) are enriched in basic and acidic residues. Position 2077 is a phosphoserine (serine 2077). Plectin repeat units follow at residues 2290 to 2332 (LNVL…KLME), 2367 to 2410 (NVLM…LERQ), 2411 to 2437 (VVTG…GLVD), 2501 to 2543 (RLLT…LKRV), 2581 to 2612 (EVQA…LTNE), and 2686 to 2730 (LKVL…ASHQ). 2 disordered regions span residues 3013–3034 (EHDS…GKEA) and 3104–3174 (SEPF…NECK). The span at 3115–3124 (EGLHYQESDG) shows a compositional bias: basic and acidic residues. A Phosphoserine modification is found at serine 3122. Polar residues predominate over residues 3129–3158 (TGPSQISKTDKSFQGTTRQETNYQDSWVTS). LRR repeat units lie at residues 3239-3262 (LTGE…SIED) and 3264-3283 (VTQR…LFKG). The span at 3321–3332 (EKTPQEKLRESP) shows a compositional bias: basic and acidic residues. Residues 3321–3350 (EKTPQEKLRESPGSEQTPFMTAPEGKGNGG) are disordered. Residue serine 3331 is modified to Phosphoserine. LRR repeat units follow at residues 3646–3669 (QQDL…IQNR) and 3696–3720 (LTAL…TRVA). Spectrin repeat units follow at residues 3883–3957 (ELQK…NSFK) and 4000–4108 (QYHQ…SLLQ). Position 3927 is a phosphoserine (serine 3927). One copy of the LRR 13 repeat lies at 3936–3958 (KGDLRFVTISGQKVLDMENSFKE). LRR repeat units follow at residues 4125-4150 (LQSI…VIQE) and 4261-4287 (IQEL…ELSS). The stretch at 4466–4574 (RMEEVHKEAN…TVARQRQLEE (109 aa)) is one Spectrin 3 repeat. Serine 4495, serine 4496, and serine 4521 each carry phosphoserine. LRR repeat units lie at residues 4511–4534 (KAFL…LAGL), 4601–4624 (GVLG…QFML), and 4769–4792 (KKRL…RINR). 2 Spectrin repeats span residues 4800–4904 (TQQF…SRLK) and 4909–5012 (KAQK…SLEE). 2 positions are modified to phosphoserine: serine 4836 and serine 4962. LRR repeat units follow at residues 5051 to 5076 (NKNL…YLRN), 5172 to 5194 (NKIH…MLEE), and 5281 to 5304 (KEQV…LIQS). Spectrin repeat units lie at residues 5236–5341 (EDFY…QLQE), 5348–5450 (KFQD…QLED), and 5455–5557 (AKQF…LRTL). The residue at position 5435 (threonine 5435) is a Phosphothreonine. The disordered stretch occupies residues 5583 to 5603 (EELATSGGQSPTGEQIPQFQQ). Residues 5588–5603 (SGGQSPTGEQIPQFQQ) show a composition bias toward polar residues. LRR repeat units lie at residues 5695–5719 (MALG…AFSI) and 5804–5828 (AQLP…QLRE). 9 Spectrin repeats span residues 5783 to 5885 (NQFW…ALDE), 6005 to 6110 (LAEK…KLED), 6115 to 6219 (AVQY…HKLE), 6225 to 6328 (LGQF…QQLQ), 6333 to 6439 (QAQG…KLEE), 6443 to 6547 (LATE…RSLD), 6552 to 6658 (RAKQ…KLEE), 6665 to 6766 (QFMD…RLEQ), and 6771 to 6874 (AEVF…QRLE). Phosphoserine occurs at positions 5808 and 6032. Lysine 6210 is subject to N6-acetyllysine. The stretch at 6496 to 6519 (RDQIIELDQTGNQLKFLSQKQDVV) is one LRR 24 repeat. Residues 6951–6981 (PTHAPFIEKSRSGGRKSLSQPTPPPMPILSQ) are disordered. Serine 6967 carries the post-translational modification Phosphoserine. EF-hand domains lie at 7041–7076 (HKKS…SKFP) and 7077–7112 (TTKL…NKDA). Residues aspartate 7054, aspartate 7056, aspartate 7058, lysine 7060, glutamate 7065, aspartate 7090, aspartate 7092, aspartate 7094, tyrosine 7096, and glutamate 7101 each contribute to the Ca(2+) site. One can recognise a GAR domain in the interval 7117–7189 (TDADKIEDEV…EFLVKNDPCR (73 aa)). The tract at residues 7117 to 7388 (TDADKIEDEV…ASPRTPGPKR (272 aa)) is C-terminal tail. The disordered stretch occupies residues 7205 to 7388 (PEGASQGMTP…ASPRTPGPKR (184 aa)). Over residues 7225–7259 (SSRAASPTRSSSSASQSNHSCTSMPSSPATPASGT) the composition is skewed to low complexity. Threonine 7254 is subject to Phosphothreonine. Residues 7275-7299 (TFHSSRTSLAGDTSNSSSPASTGAK) are compositionally biased toward polar residues. A phosphoserine mark is found at serine 7279 and serine 7292. Residues 7310-7324 (SRPGSRAGSRAGSRA) show a composition bias toward low complexity. Residues 7313 to 7328 (GSRAGSRAGSRASSRR) are 4 X 4 AA tandem repeats of [GS]-S-R-[AR]. Phosphoserine is present on residues serine 7330 and serine 7333. The span at 7339–7361 (ETQSACSDTSESSAAGGQGNSRR) shows a compositional bias: polar residues.

It belongs to the plakin or cytolinker family. In terms of assembly, isoform 2: Interacts with MAPRE1, CLASP1, CLASP2, AXIN1 and LRP6. Isoform 2: Found in a complex composed of MACF1, APC, AXIN1, CTNNB1 and GSK3B. Isoform 2: Interacts with GOLGA4. Isoform 2: Interacts with CAMSAP3. In terms of processing, phosphorylated on serine residues in the C-terminal tail by GSK3B. Phosphorylation inhibits microtubule-binding and this plays a critical role in bulge stem cell migration and skin wound repair. Wnt-signaling can repress phosphorylation. As to expression, isoform 2: Ubiquitously expressed. Isoform 1: Expressed in cell lines NCI-H460, A-549 and HaCaT. Isoform 4: Expressed in heart, lung, pituitary and placenta, not found in brain, kidney, liver, pancreas or skeletal muscle.

The protein resides in the cytoplasm. It is found in the cytoskeleton. Its subcellular location is the golgi apparatus. The protein localises to the cell membrane. It localises to the cell projection. The protein resides in the ruffle membrane. Its function is as follows. F-actin-binding protein which plays a role in cross-linking actin to other cytoskeletal proteins and also binds to microtubules. Plays an important role in ERBB2-dependent stabilization of microtubules at the cell cortex. Acts as a positive regulator of Wnt receptor signaling pathway and is involved in the translocation of AXIN1 and its associated complex (composed of APC, CTNNB1 and GSK3B) from the cytoplasm to the cell membrane. Has actin-regulated ATPase activity and is essential for controlling focal adhesions (FAs) assembly and dynamics. Interaction with CAMSAP3 at the minus ends of non-centrosomal microtubules tethers microtubules minus-ends to actin filaments, regulating focal adhesion size and cell migration. May play role in delivery of transport vesicles containing GPI-linked proteins from the trans-Golgi network through its interaction with GOLGA4. Plays a key role in wound healing and epidermal cell migration. Required for efficient upward migration of bulge cells in response to wounding and this function is primarily rooted in its ability to coordinate microtubule dynamics and polarize hair follicle stem cells. As a regulator of actin and microtubule arrangement and stabilization, it plays an essential role in neurite outgrowth, branching and spine formation during brain development. The protein is Microtubule-actin cross-linking factor 1, isoforms 1/2/3/4/5 of Homo sapiens (Human).